The primary structure comprises 363 residues: Flagellar P-ring protein (363 aa).

Residues 1 to 20 form the signal peptide; it reads MKIKLILACALMVFSAASSA.

The protein belongs to the FlgI family. In terms of assembly, the basal body constitutes a major portion of the flagellar organelle and consists of four rings (L,P,S, and M) mounted on a central rod.

The protein resides in the periplasm. It is found in the bacterial flagellum basal body. Functionally, assembles around the rod to form the L-ring and probably protects the motor/basal body from shearing forces during rotation. This Shewanella loihica (strain ATCC BAA-1088 / PV-4) protein is Flagellar P-ring protein.